The primary structure comprises 211 residues: Dual specificity protein phosphatase 26 (211 aa).

Residues 60–207 (NHADEVWPGL…LLALDRRLRQ (148 aa)) form the Tyrosine-protein phosphatase domain. Cys152 functions as the Phosphocysteine intermediate in the catalytic mechanism.

This sequence belongs to the protein-tyrosine phosphatase family. Non-receptor class dual specificity subfamily. Interacts with HSF4.

The protein localises to the cytoplasm. It is found in the nucleus. Its subcellular location is the golgi apparatus. It catalyses the reaction O-phospho-L-tyrosyl-[protein] + H2O = L-tyrosyl-[protein] + phosphate. The catalysed reaction is O-phospho-L-seryl-[protein] + H2O = L-seryl-[protein] + phosphate. It carries out the reaction O-phospho-L-threonyl-[protein] + H2O = L-threonyl-[protein] + phosphate. Its function is as follows. Inactivates MAPK1 and MAPK3 which leads to dephosphorylation of heat shock factor protein 4 and a reduction in its DNA-binding activity. This Rattus norvegicus (Rat) protein is Dual specificity protein phosphatase 26 (Dusp26).